A 782-amino-acid polypeptide reads, in one-letter code: cGMP-specific 3',5'-cyclic phosphodiesterase gamma (782 aa).

Topologically, residues 1 to 69 (MKHMFKNILF…LCDNMYSKKY (69 aa)) are cytoplasmic. A helical transmembrane segment spans residues 70-90 (VILVSHLISLLLMYSVCLIVG). Over 91-97 (NINDLFS) the chain is Extracellular. Residues 98–118 (VLKLTYILLHTFTAINIILIL) form a helical membrane-spanning segment. The Cytoplasmic segment spans residues 119–135 (TLHATHYVEMFKSIKGE). Residues 136–156 (IFIFYIMMIFVIWCSWLFILF) form a helical membrane-spanning segment. Topologically, residues 157–181 (NNIKDLLPIVVNVNNFLYATYANNK) are extracellular. The helical transmembrane segment at 182–202 (INIVLGFFAYLPIFYLITIIP) threads the bilayer. At 203-208 (CRICYS) the chain is on the cytoplasmic side. The helical transmembrane segment at 209–229 (CAFDILFFIMKVAIFSVYYLI) threads the bilayer. At 230–239 (TMKSYILTDN) the chain is on the extracellular side. A helical membrane pass occupies residues 240-260 (IFMIISALVGSLFIFVIRYII). The Cytoplasmic portion of the chain corresponds to 261 to 782 (EIQRRLSFHN…YAPNLNIYKL (522 aa)). The disordered stretch occupies residues 376 to 396 (GSKEEPEAESESECVDESKEG). A compositionally biased stretch (acidic residues) spans 381-390 (PEAESESECV). The PDEase domain occupies 423-751 (YEEKENEILK…SKWTKIEKDE (329 aa)). H504 acts as the Proton donor in catalysis. Position 504 to 508 (504 to 508 (HNSIH)) interacts with a nucleoside 3',5'-cyclic phosphate. 4 residues coordinate a divalent metal cation: H508, H544, D545, and D654. A nucleoside 3',5'-cyclic phosphate-binding residues include D545, D654, and Q706.

The protein belongs to the cyclic nucleotide phosphodiesterase family. It depends on a divalent metal cation as a cofactor.

It is found in the membrane. Its subcellular location is the endoplasmic reticulum membrane. The catalysed reaction is 3',5'-cyclic GMP + H2O = GMP + H(+). Its pathway is purine metabolism; 3',5'-cyclic GMP degradation; GMP from 3',5'-cyclic GMP: step 1/1. In terms of biological role, specifically hydrolyzes the second messenger cGMP, which is a key regulator of many important physiological processes. Probably by regulating cGMP levels, required for sporozoite motility and invasion of the mosquito salivary glands. The sequence is that of cGMP-specific 3',5'-cyclic phosphodiesterase gamma from Plasmodium yoelii.